The sequence spans 611 residues: Oligoendopeptidase F homolog (611 aa).

Histidine 384 provides a ligand contact to Zn(2+). Residue glutamate 385 is part of the active site. Histidine 388 and histidine 391 together coordinate Zn(2+).

The protein belongs to the peptidase M3B family. Zn(2+) serves as cofactor.

The polypeptide is Oligoendopeptidase F homolog (pepF) (Mycoplasma pneumoniae (strain ATCC 29342 / M129 / Subtype 1) (Mycoplasmoides pneumoniae)).